Here is a 393-residue protein sequence, read N- to C-terminus: Putative cytochrome P450 143 (393 aa).

Cys-342 serves as a coordination point for heme.

Belongs to the cytochrome P450 family. It depends on heme as a cofactor.

The chain is Putative cytochrome P450 143 (cyp143) from Mycobacterium bovis (strain ATCC BAA-935 / AF2122/97).